Consider the following 475-residue polypeptide: MHFETVIGLEVHVELKTDSKMFSPSPAHFGAEPNSNTNVIDLAYPGVLPVVNRRAVDWAMRASMALNMDIATNSKFDRKNYFYPDNPKAYQISQFDQPIGENGYIDIEVDGETKRIGITRLHMEEDAGKSTHKDGYSLVDLNRQGTPLIEIVSEPDIRSPKEAYAYLEKLRSIIQYTGVSDCKMEEGSLRCDANISLRPYGQEEFGTKTELKNLNSFNYVRKGLEYEEKRQEEELLNGGTIGQETRRFDESTGKTILMRVKEGSDDYRYFPEPDIVPLYVDEEWKECVRQTIPELPDERKAKYVNDLGLPEYDAHVLTLTKEMSDFFEGAIEKGADVKLTSNWLMGGVNEYLNKNQVELQDTKLTPENLAGMIKLIEDGTMSSKIAKKVFPELAENGGDAKQIMEDKGLVQISDEATLTKFVTEALDNNPQSVEDYKNGKGKAMGFLVGQIMKASKGQANPQKVNQILKQELDKR.

The protein belongs to the GatB/GatE family. GatB subfamily. Heterotrimer of A, B and C subunits.

It catalyses the reaction L-glutamyl-tRNA(Gln) + L-glutamine + ATP + H2O = L-glutaminyl-tRNA(Gln) + L-glutamate + ADP + phosphate + H(+). The catalysed reaction is L-aspartyl-tRNA(Asn) + L-glutamine + ATP + H2O = L-asparaginyl-tRNA(Asn) + L-glutamate + ADP + phosphate + 2 H(+). Allows the formation of correctly charged Asn-tRNA(Asn) or Gln-tRNA(Gln) through the transamidation of misacylated Asp-tRNA(Asn) or Glu-tRNA(Gln) in organisms which lack either or both of asparaginyl-tRNA or glutaminyl-tRNA synthetases. The reaction takes place in the presence of glutamine and ATP through an activated phospho-Asp-tRNA(Asn) or phospho-Glu-tRNA(Gln). The sequence is that of Aspartyl/glutamyl-tRNA(Asn/Gln) amidotransferase subunit B from Staphylococcus haemolyticus (strain JCSC1435).